Consider the following 665-residue polypeptide: Pre-mRNA-processing factor 39 (665 aa).

A compositionally biased stretch (basic and acidic residues) spans 1–11 (MQNSHMEEYRN). Positions 1-28 (MQNSHMEEYRNSDNGSTGNSSEVAVVEH) are disordered. The segment covering 12-22 (SDNGSTGNSSE) has biased composition (polar residues). At Ser-44 the chain carries Phosphoserine. HAT repeat units lie at residues 107-139 (NHLMAARKAFDKFFVHYPYCYGYWKKYADLEKR), 141-173 (DNIKQSDEVYRRGLQAIPLSVDLWIHYINFLKE), 181-216 (ETNTTIRGTFEHAVLAAGTDFRSDKLWEMYINWENE), 218-251 (GNLREVTAVYDRILGIPTQLYSHHFQRFKEHVQN), 331-363 (FEEGIKRPYFHVKPLEKAQPKKNWKEYLEFEIE), 365-397 (GTHERVVVLFERCVISCALYEEFWIKYAKYMEN), and 402-434 (GVRHVFSRACTVHLPKKPMAHMLWAAFEEQQGN). A compositionally biased stretch (basic and acidic residues) spans 599-622 (QDTLKRKAENGSEEPEEKKAHTED). The disordered stretch occupies residues 599–625 (QDTLKRKAENGSEEPEEKKAHTEDLSS).

This sequence belongs to the PRP39 family.

It is found in the nucleus. In terms of biological role, involved in pre-mRNA splicing. This Mus musculus (Mouse) protein is Pre-mRNA-processing factor 39 (Prpf39).